Consider the following 214-residue polypeptide: Thiamine-phosphate synthase (214 aa).

Residues 38–42 (QLREK) and N70 contribute to the 4-amino-2-methyl-5-(diphosphooxymethyl)pyrimidine site. Positions 71 and 90 each coordinate Mg(2+). Positions 109 and 138 each coordinate 4-amino-2-methyl-5-(diphosphooxymethyl)pyrimidine. G165 is a binding site for 2-[(2R,5Z)-2-carboxy-4-methylthiazol-5(2H)-ylidene]ethyl phosphate.

It belongs to the thiamine-phosphate synthase family. It depends on Mg(2+) as a cofactor.

The catalysed reaction is 2-[(2R,5Z)-2-carboxy-4-methylthiazol-5(2H)-ylidene]ethyl phosphate + 4-amino-2-methyl-5-(diphosphooxymethyl)pyrimidine + 2 H(+) = thiamine phosphate + CO2 + diphosphate. It catalyses the reaction 2-(2-carboxy-4-methylthiazol-5-yl)ethyl phosphate + 4-amino-2-methyl-5-(diphosphooxymethyl)pyrimidine + 2 H(+) = thiamine phosphate + CO2 + diphosphate. It carries out the reaction 4-methyl-5-(2-phosphooxyethyl)-thiazole + 4-amino-2-methyl-5-(diphosphooxymethyl)pyrimidine + H(+) = thiamine phosphate + diphosphate. It participates in cofactor biosynthesis; thiamine diphosphate biosynthesis; thiamine phosphate from 4-amino-2-methyl-5-diphosphomethylpyrimidine and 4-methyl-5-(2-phosphoethyl)-thiazole: step 1/1. In terms of biological role, condenses 4-methyl-5-(beta-hydroxyethyl)thiazole monophosphate (THZ-P) and 2-methyl-4-amino-5-hydroxymethyl pyrimidine pyrophosphate (HMP-PP) to form thiamine monophosphate (TMP). The sequence is that of Thiamine-phosphate synthase from Caldanaerobacter subterraneus subsp. tengcongensis (strain DSM 15242 / JCM 11007 / NBRC 100824 / MB4) (Thermoanaerobacter tengcongensis).